Reading from the N-terminus, the 103-residue chain is Integration host factor subunit beta (103 aa).

This sequence belongs to the bacterial histone-like protein family. Heterodimer of an alpha and a beta chain.

This protein is one of the two subunits of integration host factor, a specific DNA-binding protein that functions in genetic recombination as well as in transcriptional and translational control. This Sinorhizobium medicae (strain WSM419) (Ensifer medicae) protein is Integration host factor subunit beta.